Reading from the N-terminus, the 228-residue chain is MSNSYSSNAQKKVISTSEWDDKLAEVNISKSDLNKLVMNYLVIEGYQEAAAKFQEESSTQTTVDLASIADRMAIRSAIQCGDVEKGIEIVNDLNPEILDTNPQLYFHLQQQKLIELIRKGMTAEALKFAQDELAPQGEENNKFLEELEKTISLLVFEDTAKSPLSSLLDHSQRQKTAGELNSAILLSQSQDKDPKLPTILKLLKWAQTQLDSKCIYPKITNTVTGEYE.

Residues 29 to 61 (SKSDLNKLVMNYLVIEGYQEAAAKFQEESSTQT) form the LisH domain. The 58-residue stretch at 67–124 (SIADRMAIRSAIQCGDVEKGIEIVNDLNPEILDTNPQLYFHLQQQKLIELIRKGMTAE) folds into the CTLH domain.

Belongs to the GID8 family.

It localises to the cytoplasm. Its subcellular location is the nucleus. In terms of biological role, core component of the CTLH E3 ubiquitin-protein ligase complex that mediates ubiquitination and subsequent proteasomal degradation of target proteins. Acts as a positive regulator of Wnt signaling pathway by promoting beta-catenin (CTNNB1) nuclear accumulation. This Dictyostelium discoideum (Social amoeba) protein is Glucose-induced degradation protein 8 homolog.